A 515-amino-acid chain; its full sequence is Bifunctional purine biosynthesis protein PurH (515 aa).

Residues methionine 1–valine 145 enclose the MGS-like domain.

Belongs to the PurH family.

The catalysed reaction is (6R)-10-formyltetrahydrofolate + 5-amino-1-(5-phospho-beta-D-ribosyl)imidazole-4-carboxamide = 5-formamido-1-(5-phospho-D-ribosyl)imidazole-4-carboxamide + (6S)-5,6,7,8-tetrahydrofolate. It carries out the reaction IMP + H2O = 5-formamido-1-(5-phospho-D-ribosyl)imidazole-4-carboxamide. It functions in the pathway purine metabolism; IMP biosynthesis via de novo pathway; 5-formamido-1-(5-phospho-D-ribosyl)imidazole-4-carboxamide from 5-amino-1-(5-phospho-D-ribosyl)imidazole-4-carboxamide (10-formyl THF route): step 1/1. The protein operates within purine metabolism; IMP biosynthesis via de novo pathway; IMP from 5-formamido-1-(5-phospho-D-ribosyl)imidazole-4-carboxamide: step 1/1. The polypeptide is Bifunctional purine biosynthesis protein PurH (Streptococcus mutans serotype c (strain ATCC 700610 / UA159)).